Here is a 126-residue protein sequence, read N- to C-terminus: Histone H2B type 2-E (126 aa).

Positions 1–12 (MPEPAKSAPAPK) are enriched in low complexity. Residues 1–35 (MPEPAKSAPAPKKGSKKAVTKAQKKDGKKRKRSRK) are disordered. The residue at position 2 (Pro2) is an N-acetylproline. Residue Glu3 is modified to ADP-ribosyl glutamic acid. Lys6 bears the N6-(2-hydroxyisobutyryl)lysine; alternate mark. Position 6 is an N6-(beta-hydroxybutyryl)lysine; alternate (Lys6). Lys6 is modified (N6-acetyllysine; alternate). The residue at position 6 (Lys6) is an N6-butyryllysine; alternate. Residue Lys6 is modified to N6-crotonyllysine; alternate. Lys6 bears the N6-lactoyllysine; alternate mark. Residue Lys6 forms a Glycyl lysine isopeptide (Lys-Gly) (interchain with G-Cter in SUMO2); alternate linkage. Ser7 bears the ADP-ribosylserine mark. Lys12 is subject to N6-(beta-hydroxybutyryl)lysine; alternate. Lys12 and Lys13 each carry N6-acetyllysine; alternate. N6-crotonyllysine; alternate is present on residues Lys12 and Lys13. Residue Lys12 is modified to N6-lactoyllysine; alternate. Position 13 is an N6-(2-hydroxyisobutyryl)lysine; alternate (Lys13). Residue Ser15 is modified to Phosphoserine; by STK4/MST1. 4 positions are modified to N6-acetyllysine; alternate: Lys16, Lys17, Lys21, and Lys24. 4 positions are modified to N6-crotonyllysine; alternate: Lys16, Lys17, Lys21, and Lys24. 4 positions are modified to N6-lactoyllysine; alternate: Lys16, Lys17, Lys21, and Lys24. Lys17 and Lys21 each carry N6-(beta-hydroxybutyryl)lysine; alternate. Lys17 carries the N6-glutaryllysine; alternate modification. Residues Lys21 and Lys24 each carry the N6-(2-hydroxyisobutyryl)lysine; alternate modification. Position 21 is an N6-butyryllysine; alternate (Lys21). Lys21 is covalently cross-linked (Glycyl lysine isopeptide (Lys-Gly) (interchain with G-Cter in SUMO2); alternate). Lys25 carries the post-translational modification N6-(2-hydroxyisobutyryl)lysine. At Lys35 the chain carries N6-(2-hydroxyisobutyryl)lysine; alternate. Position 35 is an N6-(beta-hydroxybutyryl)lysine; alternate (Lys35). The residue at position 35 (Lys35) is an N6-crotonyllysine; alternate. An N6-glutaryllysine; alternate modification is found at Lys35. At Lys35 the chain carries N6-succinyllysine; alternate. Lys35 participates in a covalent cross-link: Glycyl lysine isopeptide (Lys-Gly) (interchain with G-Cter in ubiquitin); alternate. Residue Glu36 is modified to PolyADP-ribosyl glutamic acid. Ser37 bears the Phosphoserine; by AMPK mark. N6-(2-hydroxyisobutyryl)lysine; alternate is present on residues Lys44, Lys47, and Lys58. An N6-lactoyllysine; alternate modification is found at Lys44. An N6-glutaryllysine; alternate mark is found at Lys44 and Lys47. Position 47 is an N6-methyllysine; alternate (Lys47). N6,N6-dimethyllysine; alternate is present on Lys58. Arg80 bears the Dimethylated arginine mark. An N6-(2-hydroxyisobutyryl)lysine; alternate modification is found at Lys86. Lys86 carries the N6-(beta-hydroxybutyryl)lysine; alternate modification. Position 86 is an N6-acetyllysine; alternate (Lys86). Lys86 carries the post-translational modification N6-lactoyllysine; alternate. Lys86 carries the post-translational modification N6,N6,N6-trimethyllysine; alternate. Omega-N-methylarginine occurs at positions 87 and 93. Lys109 bears the N6-(2-hydroxyisobutyryl)lysine; alternate mark. The residue at position 109 (Lys109) is an N6-lactoyllysine; alternate. Lys109 is modified (N6-glutaryllysine; alternate). N6-methyllysine; alternate is present on Lys109. Ser113 carries O-linked (GlcNAc) serine glycosylation. A Phosphothreonine modification is found at Thr116. Lys117 and Lys121 each carry N6-(2-hydroxyisobutyryl)lysine; alternate. N6-(beta-hydroxybutyryl)lysine; alternate is present on residues Lys117 and Lys121. N6-lactoyllysine; alternate occurs at positions 117 and 121. An N6-glutaryllysine; alternate mark is found at Lys117 and Lys121. Lys117 and Lys121 each carry N6-succinyllysine; alternate. Lys117 carries the post-translational modification N6-malonyllysine; alternate. At Lys117 the chain carries N6-methylated lysine; alternate. Residue Lys121 forms a Glycyl lysine isopeptide (Lys-Gly) (interchain with G-Cter in ubiquitin); alternate linkage.

The protein belongs to the histone H2B family. The nucleosome is a histone octamer containing two molecules each of H2A, H2B, H3 and H4 assembled in one H3-H4 heterotetramer and two H2A-H2B heterodimers. The octamer wraps approximately 147 bp of DNA. In terms of processing, monoubiquitination at Lys-35 (H2BK34Ub) by the MSL1/MSL2 dimer is required for histone H3 'Lys-4' (H3K4me) and 'Lys-79' (H3K79me) methylation and transcription activation at specific gene loci, such as HOXA9 and MEIS1 loci. Similarly, monoubiquitination at Lys-121 (H2BK120Ub) by the RNF20/40 complex gives a specific tag for epigenetic transcriptional activation and is also prerequisite for histone H3 'Lys-4' and 'Lys-79' methylation. It also functions cooperatively with the FACT dimer to stimulate elongation by RNA polymerase II. H2BK120Ub also acts as a regulator of mRNA splicing: deubiquitination by USP49 is required for efficient cotranscriptional splicing of a large set of exons. Phosphorylation at Ser-37 (H2BS36ph) by AMPK in response to stress promotes transcription. Phosphorylated on Ser-15 (H2BS14ph) by STK4/MST1 during apoptosis; which facilitates apoptotic chromatin condensation. Also phosphorylated on Ser-15 in response to DNA double strand breaks (DSBs), and in correlation with somatic hypermutation and immunoglobulin class-switch recombination. Post-translationally, glcNAcylation at Ser-113 promotes monoubiquitination of Lys-121. It fluctuates in response to extracellular glucose, and associates with transcribed genes. In terms of processing, ADP-ribosylated by PARP1 or PARP2 on Ser-7 (H2BS6ADPr) in response to DNA damage. H2BS6ADPr promotes recruitment of CHD1L. Mono-ADP-ribosylated on Glu-3 (H2BE2ADPr) by PARP3 in response to single-strand breaks. Poly ADP-ribosylation on Glu-36 (H2BE35ADPr) by PARP1 regulates adipogenesis: it inhibits phosphorylation at Ser-37 (H2BS36ph), thereby blocking expression of pro-adipogenetic genes. Crotonylation (Kcr) is specifically present in male germ cells and marks testis-specific genes in post-meiotic cells, including X-linked genes that escape sex chromosome inactivation in haploid cells. Crotonylation marks active promoters and enhancers and confers resistance to transcriptional repressors. It is also associated with post-meiotically activated genes on autosomes. Post-translationally, lactylated in macrophages by EP300/P300 by using lactoyl-CoA directly derived from endogenous or exogenous lactate, leading to stimulates gene transcription.

Its subcellular location is the nucleus. It is found in the chromosome. Core component of nucleosome. Nucleosomes wrap and compact DNA into chromatin, limiting DNA accessibility to the cellular machineries which require DNA as a template. Histones thereby play a central role in transcription regulation, DNA repair, DNA replication and chromosomal stability. DNA accessibility is regulated via a complex set of post-translational modifications of histones, also called histone code, and nucleosome remodeling. In terms of biological role, has broad antibacterial activity. May contribute to the formation of the functional antimicrobial barrier of the colonic epithelium, and to the bactericidal activity of amniotic fluid. The chain is Histone H2B type 2-E from Homo sapiens (Human).